The following is a 433-amino-acid chain: Probable mannan endo-1,4-beta-mannosidase F (433 aa).

Positions Met-1–Ser-19 are cleaved as a signal peptide. Residues Gly-20–Val-53 form the CBM1 domain. Residues Thr-56–Thr-82 form a thr-rich linker region. Residues Ser-83–Arg-433 form a catalytic region. The N-linked (GlcNAc...) asparagine glycan is linked to Asn-97. The substrate site is built by Trp-142 and Asn-255. Catalysis depends on Glu-256, which acts as the Proton donor. Substrate is bound at residue Tyr-331. Glu-364 functions as the Nucleophile in the catalytic mechanism. Trp-394 is a substrate binding site.

The protein belongs to the glycosyl hydrolase 5 (cellulase A) family.

Its subcellular location is the secreted. The enzyme catalyses Random hydrolysis of (1-&gt;4)-beta-D-mannosidic linkages in mannans, galactomannans and glucomannans.. Endo-1,4-mannanase, a crucial enzyme for depolymerization of seed galactomannans and wood galactoglucomannans. In Emericella nidulans (strain FGSC A4 / ATCC 38163 / CBS 112.46 / NRRL 194 / M139) (Aspergillus nidulans), this protein is Probable mannan endo-1,4-beta-mannosidase F (manF).